A 175-amino-acid polypeptide reads, in one-letter code: Small ribosomal subunit protein uS5 (175 aa).

The interval 1–21 (MAKPERNKKPQQAEERDDGMR) is disordered. Residues 20-83 (MREKMVAVNR…EEARRKMAKV (64 aa)) form the S5 DRBM domain.

Belongs to the universal ribosomal protein uS5 family. In terms of assembly, part of the 30S ribosomal subunit. Contacts proteins S4 and S8.

In terms of biological role, with S4 and S12 plays an important role in translational accuracy. Located at the back of the 30S subunit body where it stabilizes the conformation of the head with respect to the body. The sequence is that of Small ribosomal subunit protein uS5 from Dechloromonas aromatica (strain RCB).